Here is a 320-residue protein sequence, read N- to C-terminus: MTRTHFDSIRAGGLNWSSLPLKLFAGGNAKFWDPADIDFSRDRADWEALTEREREYATRLCAEFIAGEEAVTKDIQPFMSAMRAEGRLGDEMYLTQFAFEEAKHTQVFRMWLDAVGVTDDLHSLIEEVPAYVQIFCEELPAALEALTSDPSPAAQVRASVVYNHVVEGMLALTGYYAWHRICVDRGILPGMQELVRRIGDDERRHMAWGTFTCRRHVAADDANWAVFETHMNELIPVALRLTQEGFALYGDDIPFGLEEGEFLQYSSDRGMRRFGTISSARGRPLAEIDVDYTPLQLEDTFADEDERALTAVKAAAAAAN.

3 residues coordinate Mn(2+): Glu68, Glu101, and His104. Residues 71-162 (VTKDIQPFMS…AAQVRASVVY (92 aa)) constitute a cross-link (3-(O4'-tyrosyl)-valine (Val-Tyr)). Glu101 provides a ligand contact to Fe cation. Fe cation is bound by residues Glu167, Glu202, and His205.

It belongs to the ribonucleoside diphosphate reductase small chain family. R2-like ligand binding oxidase subfamily. In terms of assembly, homodimer. Requires Fe cation as cofactor. It depends on Mn(2+) as a cofactor.

In terms of biological role, probable oxidase that might be involved in lipid metabolism. This chain is R2-like ligand binding oxidase (nrdB), found in Mycolicibacterium smegmatis (strain ATCC 700084 / mc(2)155) (Mycobacterium smegmatis).